A 229-amino-acid chain; its full sequence is Putative N-acetylmannosamine-6-phosphate 2-epimerase 2 (229 aa).

Belongs to the NanE family.

The catalysed reaction is an N-acyl-D-glucosamine 6-phosphate = an N-acyl-D-mannosamine 6-phosphate. The protein operates within amino-sugar metabolism; N-acetylneuraminate degradation; D-fructose 6-phosphate from N-acetylneuraminate: step 3/5. Converts N-acetylmannosamine-6-phosphate (ManNAc-6-P) to N-acetylglucosamine-6-phosphate (GlcNAc-6-P). The polypeptide is Putative N-acetylmannosamine-6-phosphate 2-epimerase 2 (nanE2) (Salmonella typhimurium (strain LT2 / SGSC1412 / ATCC 700720)).